The chain runs to 513 residues: Probable vesicular acetylcholine transporter-A (513 aa).

Residues 1 to 39 (MATEESGGLAQTAAVKLSEMGERTKQLGNAIQDPERQRR) are Cytoplasmic-facing. The chain crosses the membrane as a helical span at residues 40 to 60 (IILVIVCVALLLDNMLYMVIV). At 61–98 (PIVPDYLAHLESESEQAHVKGNSSINITQNENFDLQIG) the chain is on the lumenal, vesicle side. 2 N-linked (GlcNAc...) asparagine glycosylation sites follow: Asn-82 and Asn-86. A helical membrane pass occupies residues 99 to 119 (VLFASKAILQLLVNPLTGTFI). The Cytoplasmic portion of the chain corresponds to 120–125 (DRVGYD). The helical transmembrane segment at 126–146 (IPLLIGLSIMFVSTCIFAFAE) threads the bilayer. The Lumenal, vesicle portion of the chain corresponds to 147 to 156 (NYATLFMARS). The helical transmembrane segment at 157 to 174 (LQGLGSAFADTSGIAMIA) threads the bilayer. At 175–186 (DKYAEESERSRA) the chain is on the cytoplasmic side. Residues 187 to 207 (LGIALAFISFGSLAAPPFGGV) traverse the membrane as a helical segment. The Lumenal, vesicle segment spans residues 208–215 (LYEFAGKR). A helical membrane pass occupies residues 216 to 236 (FPFIALACVCLADGILCLTVL). Topologically, residues 237–257 (KPFSSRTRENMPVGTPIYKLM) are cytoplasmic. Residues 258–278 (IDPYIAVVAGALTTCNIPLAF) traverse the membrane as a helical segment. Topologically, residues 279-296 (LEPTIANWMEETMNASQW) are lumenal, vesicle. Asn-292 is a glycosylation site (N-linked (GlcNAc...) asparagine). Residues 297–317 (QIGITWLPAFFPHILGVYLTV) traverse the membrane as a helical segment. Residues 318–327 (KLAAKYPHLQ) lie on the Cytoplasmic side of the membrane. The chain crosses the membrane as a helical span at residues 328 to 348 (WFYGALGMVIIGASSCIVPAC). The Lumenal, vesicle segment spans residues 349-353 (KNFEQ). The chain crosses the membrane as a helical span at residues 354–374 (LIIPLCGVCFGIALVDTALLP). Over 375-390 (TLAFLVDVRHVSVYGS) the chain is Cytoplasmic. Residues 391–411 (VYAIADISYCVAYALGPIVAG) form a helical membrane-spanning segment. Residues 412 to 418 (KIVHDLG) lie on the Lumenal, vesicle side of the membrane. Residues 419–439 (FVQLNLGMGLANVLYAPALLL) traverse the membrane as a helical segment. The Cytoplasmic segment spans residues 440 to 513 (LRNVSLMKPS…EEETSEPEYI (74 aa)). Residues 475-513 (RKKHGYSSSGNCVPIDENGTFAGQSKSFSEEETSEPEYI) are disordered. A compositionally biased stretch (acidic residues) spans 504–513 (EEETSEPEYI).

This sequence belongs to the major facilitator superfamily. Vesicular transporter family.

It localises to the membrane. In terms of biological role, involved in acetylcholine transport into synaptic vesicles. The chain is Probable vesicular acetylcholine transporter-A from Danio rerio (Zebrafish).